Here is a 102-residue protein sequence, read N- to C-terminus: 10 kDa heat shock protein, mitochondrial (102 aa).

A2 carries the N-acetylalanine modification. The residue at position 8 (K8) is an N6-acetyllysine. K28 carries the post-translational modification N6-succinyllysine. K40 is modified (N6-acetyllysine; alternate). N6-malonyllysine; alternate occurs at positions 40, 54, and 56. Residues K40, K54, K56, K66, and K70 each carry the N6-succinyllysine; alternate modification. N6-acetyllysine; alternate is present on residues K56, K66, and K70. Residue T79 is modified to Phosphothreonine. N6-acetyllysine; alternate occurs at positions 80 and 86. N6-succinyllysine; alternate is present on residues K80 and K86. At K99 the chain carries N6-acetyllysine.

Belongs to the GroES chaperonin family. Homoheptamer arranged in a ring structure. 2 heptameric Hsp10 rings interact with a Hsp60 tetradecamer in the structure of a back-to-back double heptameric ring to form the symmetrical football complex.

The protein localises to the mitochondrion matrix. Functionally, co-chaperonin implicated in mitochondrial protein import and macromolecular assembly. Together with Hsp60, facilitates the correct folding of imported proteins. May also prevent misfolding and promote the refolding and proper assembly of unfolded polypeptides generated under stress conditions in the mitochondrial matrix. The functional units of these chaperonins consist of heptameric rings of the large subunit Hsp60, which function as a back-to-back double ring. In a cyclic reaction, Hsp60 ring complexes bind one unfolded substrate protein per ring, followed by the binding of ATP and association with 2 heptameric rings of the co-chaperonin Hsp10. This leads to sequestration of the substrate protein in the inner cavity of Hsp60 where, for a certain period of time, it can fold undisturbed by other cell components. Synchronous hydrolysis of ATP in all Hsp60 subunits results in the dissociation of the chaperonin rings and the release of ADP and the folded substrate protein. The chain is 10 kDa heat shock protein, mitochondrial (Hspe1) from Rattus norvegicus (Rat).